Here is a 402-residue protein sequence, read N- to C-terminus: Putative F-box protein At1g70970 (402 aa).

Positions 4–52 (SSSETLHVEDLQTEIMSWLPLKSLLRFVIVSKKWASIIRGEQFKALYLR) constitute an F-box domain.

The chain is Putative F-box protein At1g70970 from Arabidopsis thaliana (Mouse-ear cress).